A 417-amino-acid chain; its full sequence is UDP-N-acetylglucosamine 1-carboxyvinyltransferase (417 aa).

Phosphoenolpyruvate is bound at residue 22 to 23; the sequence is KN. Arg-93 contacts UDP-N-acetyl-alpha-D-glucosamine. The active-site Proton donor is the Cys-117. Cys-117 is modified (2-(S-cysteinyl)pyruvic acid O-phosphothioketal). UDP-N-acetyl-alpha-D-glucosamine is bound by residues Asp-304 and Ile-326.

It belongs to the EPSP synthase family. MurA subfamily.

It is found in the cytoplasm. It carries out the reaction phosphoenolpyruvate + UDP-N-acetyl-alpha-D-glucosamine = UDP-N-acetyl-3-O-(1-carboxyvinyl)-alpha-D-glucosamine + phosphate. It functions in the pathway cell wall biogenesis; peptidoglycan biosynthesis. Functionally, cell wall formation. Adds enolpyruvyl to UDP-N-acetylglucosamine. The chain is UDP-N-acetylglucosamine 1-carboxyvinyltransferase from Neisseria gonorrhoeae (strain ATCC 700825 / FA 1090).